Reading from the N-terminus, the 377-residue chain is Opsin-5 (377 aa).

The Extracellular portion of the chain corresponds to 1-33 (MALNHTALPQDERLPHYLRDEDPFASKLSWEAD). Asn-4 carries N-linked (GlcNAc...) asparagine glycosylation. The chain crosses the membrane as a helical span at residues 34–54 (LVAGFYLTIIGILSTFGNGYV). The Cytoplasmic portion of the chain corresponds to 55–74 (LYMSSRRKKKLRPAEIMTIN). Residues 75–95 (LAVCDLGISVVGKPFTIISCF) traverse the membrane as a helical segment. Over 96–108 (CHRWVFGWFGCRW) the chain is Extracellular. Cys-106 and Cys-183 form a disulfide bridge. A helical transmembrane segment spans residues 109–129 (YGWAGFFFGCGSLITMTAVSL). The Cytoplasmic segment spans residues 130–150 (DRYLKICYLSYGVWLKRKHAY). A helical transmembrane segment spans residues 151-171 (ICLAVIWAYASFWTTMPLVGL). The Extracellular portion of the chain corresponds to 172 to 197 (GDYAPEPFGTSCTLDWWLAQASGGGQ). The chain crosses the membrane as a helical span at residues 198-218 (VFILSILFFCLLLPTAVIVFS). Residues 219-252 (YAKIIAKVKSSSKEVAHFDSRIHSSHVLEVKLTK) lie on the Cytoplasmic side of the membrane. Residues 253-273 (VAMLICAGFLIAWIPYAVVSV) form a helical membrane-spanning segment. Topologically, residues 274-288 (WSAFGRPDSIPIQLS) are extracellular. The helical transmembrane segment at 289–309 (VVPTLLAKSAAMYNPIIYQVI) threads the bilayer. Lys-296 carries the post-translational modification N6-(retinylidene)lysine. Residues 310 to 377 (DYRFACCQAG…HSNDGDCGKK (68 aa)) are Cytoplasmic-facing. S-palmitoyl cysteine attachment occurs at residues Cys-315 and Cys-316. The interval 357–377 (FTSAHVMDGESHSNDGDCGKK) is disordered. Positions 363–377 (MDGESHSNDGDCGKK) are enriched in basic and acidic residues.

It belongs to the G-protein coupled receptor 1 family. Opsin subfamily. In terms of processing, it is uncertain whether Cys-315 or Cys-316 is palmitoylated. In terms of tissue distribution, expressed in the brain (at protein level). Weakly expressed in the skin and liver (at protein level). Abundantly expressed in striated muscle cells. Expressed in Math7/Atok7-dependent retinal ganglion cells in the ganglion cell layer (at protein level). Additionally expressed in horizontal and amacrine cells in the inner nuclear layer of the retina (at protein level). Expressed around the base of hair follicles and in epidermal and sebaceous gland cells of the outer ear (at protein level). Abundantly expressed in vibrissae hair follicles and weakly expressed in the vibrissae skin pad, dorsal back skin, and tail.

The protein localises to the cell membrane. G-protein coupled receptor which selectively activates G(i) type G proteins via ultraviolet A (UVA) light-mediated activation in the retina. Preferentially binds the chromophore 11-cis retinal and is a bistable protein that displays emission peaks at 380 nm (UVA light) and 470 nm (blue light). Required for the light-response in the inner plexiform layer, and contributes to the regulation of the light-response in the nerve fiber layer, via phosphorylated DAT/SLC6A3 dopamine uptake. Involved in local corneal and retinal circadian rhythm photoentrainment via modulation of the UVA light-induced phase-shift of the retina clock. Acts as a circadian photoreceptor in the outer ear and vibrissal pads, via modulation of circadian clock-gene expression in response to violet light during the light-to-dark transition phase and night phase of the circadian cycle. Required in the retina to negatively regulate hyaloid vessel regression during postnatal development via light-dependent OPN5-SLC32A1-DRD2-VEGFR2 signaling. Involved in the light-dependent regulation of retina and vitreous compartment dopamine levels. This Mus musculus (Mouse) protein is Opsin-5 (Opn5).